Consider the following 843-residue polypeptide: Protein P (843 aa).

The terminal protein domain (TP) stretch occupies residues 1–177; the sequence is MPLSYPHFRK…FCGSPYSWEQ (177 aa). Positions 178-346 are spacer; it reads ELQHGSTSIN…YCLSHIINLL (169 aa). 2 disordered regions span residues 202–221 and 285–310; these read SGIL…FQQS and TNPS…VPPG. Residues 347 to 690 form a polymerase/reverse transcriptase domain (RT) region; that stretch reads EDWGPCYEHG…YMNLYPVARQ (344 aa). Residues 357 to 600 enclose the Reverse transcriptase domain; the sequence is QHHIRTPRTP…YTLNFMGYVI (244 aa). Residues Asp429, Asp551, and Asp552 each contribute to the Mg(2+) site.

The protein belongs to the hepadnaviridae P protein family.

The catalysed reaction is DNA(n) + a 2'-deoxyribonucleoside 5'-triphosphate = DNA(n+1) + diphosphate. It carries out the reaction Endonucleolytic cleavage to 5'-phosphomonoester.. Activated by host HSP70 and HSP40 in vitro to be able to bind the epsilon loop of the pgRNA. Because deletion of the RNase H region renders the protein partly chaperone-independent, the chaperones may be needed indirectly to relieve occlusion of the RNA-binding site by this domain. Inhibited by several reverse-transcriptase inhibitors: Lamivudine, Adefovir and Entecavir. In terms of biological role, multifunctional enzyme that converts the viral RNA genome into dsDNA in viral cytoplasmic capsids. This enzyme displays a DNA polymerase activity that can copy either DNA or RNA templates, and a ribonuclease H (RNase H) activity that cleaves the RNA strand of RNA-DNA heteroduplexes in a partially processive 3'- to 5'-endonucleasic mode. Neo-synthesized pregenomic RNA (pgRNA) are encapsidated together with the P protein, and reverse-transcribed inside the nucleocapsid. Initiation of reverse-transcription occurs first by binding the epsilon loop on the pgRNA genome, and is initiated by protein priming, thereby the 5'-end of (-)DNA is covalently linked to P protein. Partial (+)DNA is synthesized from the (-)DNA template and generates the relaxed circular DNA (RC-DNA) genome. After budding and infection, the RC-DNA migrates in the nucleus, and is converted into a plasmid-like covalently closed circular DNA (cccDNA). The activity of P protein does not seem to be necessary for cccDNA generation, and is presumably released from (+)DNA by host nuclear DNA repair machinery. In Hepatitis B virus genotype F1 (isolate Argentina/sa11/2000) (HBV-F), this protein is Protein P.